The primary structure comprises 175 residues: MIDDDGYRPNVGIVICNLDGQVLWARRYGQHSWQFPQGGINAGETAEQAMYRELFEEVGLSRKDVRILASTRNWLRYKLPKRLVRWDTKPVCIGQKQKWFLLQLLCPDADINMQRGGIPEFDGWRWVSFWYPVRQVVSFKRDVYRRVMKEFSGVVMPLQETAAQRSASAHRRKRG.

One can recognise a Nudix hydrolase domain in the interval 6 to 149 (GYRPNVGIVI…KRDVYRRVMK (144 aa)). The Nudix box motif lies at 38–59 (GGINAGETAEQAMYRELFEEVG).

The protein belongs to the Nudix hydrolase family. RppH subfamily. A divalent metal cation is required as a cofactor.

Accelerates the degradation of transcripts by removing pyrophosphate from the 5'-end of triphosphorylated RNA, leading to a more labile monophosphorylated state that can stimulate subsequent ribonuclease cleavage. The chain is RNA pyrophosphohydrolase from Sodalis glossinidius (strain morsitans).